The sequence spans 290 residues: uncharacterized protein (290 aa).

The HTH lysR-type domain maps to 1 to 61 (MVMNMNHLHI…RDKHHGLMLT (61 aa)). The H-T-H motif DNA-binding region spans 20–39 (ITEAAKELFISQPAVSKAIK).

This sequence belongs to the LysR transcriptional regulatory family.

This is an uncharacterized protein from Bacillus subtilis (strain 168).